The following is a 99-amino-acid chain: Cyclin-dependent kinases regulatory subunit (99 aa).

Belongs to the CKS family. In terms of assembly, forms a homohexamer that can probably bind six kinase subunits.

In terms of biological role, binds to the catalytic subunit of the cyclin dependent kinases (Cdc2) and is essential for their biological function. The polypeptide is Cyclin-dependent kinases regulatory subunit (Leishmania mexicana).